The sequence spans 557 residues: Protein NRT1/ PTR FAMILY 5.10 (557 aa).

The next 2 membrane-spanning stretches (helical) occupy residues 49 to 67 (FAYY…GPLG) and 79 to 99 (AWSG…DSFL). Thr-104 is subject to Phosphothreonine. 10 helical membrane passes run 105–125 (ILAA…SAMI), 144–164 (VITF…HKPC), 186–206 (SFFN…LWVL), 215–235 (WALG…VLLL), 320–340 (APIW…PTFF), 365–385 (FISL…IPIA), 401–421 (IGTG…VEMK), 443–463 (VWWL…AMVG), 479–499 (VGLA…SFMI), and 526–546 (YFYW…LYVA).

It belongs to the major facilitator superfamily. Proton-dependent oligopeptide transporter (POT/PTR) (TC 2.A.17) family. Expressed in shoots, roots and stems. Detected in leaves, flowers and siliques.

It localises to the membrane. This Arabidopsis thaliana (Mouse-ear cress) protein is Protein NRT1/ PTR FAMILY 5.10 (NPF5.10).